Reading from the N-terminus, the 293-residue chain is Ribosomal protein L11 methyltransferase (293 aa).

4 residues coordinate S-adenosyl-L-methionine: Thr145, Gly166, Asp188, and Asn230.

The protein belongs to the methyltransferase superfamily. PrmA family.

The protein resides in the cytoplasm. The catalysed reaction is L-lysyl-[protein] + 3 S-adenosyl-L-methionine = N(6),N(6),N(6)-trimethyl-L-lysyl-[protein] + 3 S-adenosyl-L-homocysteine + 3 H(+). Methylates ribosomal protein L11. This chain is Ribosomal protein L11 methyltransferase, found in Pasteurella multocida (strain Pm70).